The chain runs to 111 residues: Nucleoid-associated protein Cag_1190 (111 aa).

Belongs to the YbaB/EbfC family. Homodimer.

It is found in the cytoplasm. The protein resides in the nucleoid. Functionally, binds to DNA and alters its conformation. May be involved in regulation of gene expression, nucleoid organization and DNA protection. The polypeptide is Nucleoid-associated protein Cag_1190 (Chlorobium chlorochromatii (strain CaD3)).